Consider the following 348-residue polypeptide: MPAPADREKALDAALAAIDKNFGKGSVMRLGDEVRPPIEVIPTGSISLDVALGIGGLPRGRVVEIYGPESSGKTTVALHAVASAQKAGGIAAFIDAEHALDPDYAAKLGVDTDALLVSQPDTGEQALEIADMLIRSGALDIIVIDSVAALVPKAEIEGEMGDSHVGLQARLMSQALRKITGALNHSGTTAIFINQLREKIGVMFGSPETTTGGKALKFYASVRLDVRRIETLKDGTNPVGNRTRVKVVKNKVSPPFKQAEFDIIYGQGISREGGLIDLGVEHGFVRKSGAWYTYEGDQLGQGKENARAFLRDNPDLGDEIEKRIKEKLGIGARLDAPAEVDVEEKVDF.

Position 67-74 (67-74) interacts with ATP; the sequence is GPESSGKT.

It belongs to the RecA family.

It localises to the cytoplasm. Functionally, can catalyze the hydrolysis of ATP in the presence of single-stranded DNA, the ATP-dependent uptake of single-stranded DNA by duplex DNA, and the ATP-dependent hybridization of homologous single-stranded DNAs. It interacts with LexA causing its activation and leading to its autocatalytic cleavage. The polypeptide is Protein RecA (Kineococcus radiotolerans (strain ATCC BAA-149 / DSM 14245 / SRS30216)).